A 103-amino-acid polypeptide reads, in one-letter code: Large ribosomal subunit protein bL21 (103 aa).

Belongs to the bacterial ribosomal protein bL21 family. In terms of assembly, part of the 50S ribosomal subunit. Contacts protein L20.

In terms of biological role, this protein binds to 23S rRNA in the presence of protein L20. This Alteromonas mediterranea (strain DSM 17117 / CIP 110805 / LMG 28347 / Deep ecotype) protein is Large ribosomal subunit protein bL21.